Here is a 1288-residue protein sequence, read N- to C-terminus: 5-oxoprolinase (1288 aa).

The tract at residues 1248-1270 (PGGGGYGDPEDPAPPPGSPPLFP) is disordered. A compositionally biased stretch (pro residues) spans 1259–1270 (PAPPPGSPPLFP). Ser1265 is modified (phosphoserine).

Belongs to the oxoprolinase family. Homodimer. Expressed in testis, kidney and liver.

It is found in the cytoplasm. Its subcellular location is the cytosol. The catalysed reaction is 5-oxo-L-proline + ATP + 2 H2O = L-glutamate + ADP + phosphate + H(+). In terms of biological role, catalyzes the cleavage of 5-oxo-L-proline to form L-glutamate coupled to the hydrolysis of ATP to ADP and inorganic phosphate. The polypeptide is 5-oxoprolinase (Oplah) (Rattus norvegicus (Rat)).